The sequence spans 346 residues: Cyclin-dependent kinase 20 (346 aa).

In terms of domain architecture, Protein kinase spans Tyr4–Phe288. ATP is bound by residues Ile10–Val18 and Lys33. The active-site Proton acceptor is the Asp127. A disordered region spans residues Ser298–His324. Pro residues predominate over residues Pro303–Pro318.

This sequence belongs to the protein kinase superfamily. CMGC Ser/Thr protein kinase family. CDC2/CDKX subfamily. In terms of assembly, monomer. Interacts with MAK. Interacts with TBC1D32.

The protein localises to the nucleus. The protein resides in the cytoplasm. It is found in the cell projection. Its subcellular location is the cilium. The catalysed reaction is L-seryl-[protein] + ATP = O-phospho-L-seryl-[protein] + ADP + H(+). The enzyme catalyses L-threonyl-[protein] + ATP = O-phospho-L-threonyl-[protein] + ADP + H(+). Functionally, involved in cell growth. Activates CDK2, a kinase involved in the control of the cell cycle, by phosphorylating residue 'Thr-160'. Required for high-level Shh responses in the developing neural tube. Together with TBC1D32, controls the structure of the primary cilium by coordinating assembly of the ciliary membrane and axoneme, allowing GLI2 to be properly activated in response to SHH signaling. This is Cyclin-dependent kinase 20 (Cdk20) from Mus musculus (Mouse).